The sequence spans 283 residues: Bifunctional protein FolD (283 aa).

NADP(+) contacts are provided by residues 166-168 (GAS) and I232.

The protein belongs to the tetrahydrofolate dehydrogenase/cyclohydrolase family. Homodimer.

The enzyme catalyses (6R)-5,10-methylene-5,6,7,8-tetrahydrofolate + NADP(+) = (6R)-5,10-methenyltetrahydrofolate + NADPH. It catalyses the reaction (6R)-5,10-methenyltetrahydrofolate + H2O = (6R)-10-formyltetrahydrofolate + H(+). Its pathway is one-carbon metabolism; tetrahydrofolate interconversion. Its function is as follows. Catalyzes the oxidation of 5,10-methylenetetrahydrofolate to 5,10-methenyltetrahydrofolate and then the hydrolysis of 5,10-methenyltetrahydrofolate to 10-formyltetrahydrofolate. This chain is Bifunctional protein FolD, found in Hamiltonella defensa subsp. Acyrthosiphon pisum (strain 5AT).